Here is a 1132-residue protein sequence, read N- to C-terminus: Major DNA-binding protein (1132 aa).

The tract at residues 1103-1132 (VEELFPSPGVPSLTVGKKRKIASLLSDLDL) is required for nuclear localization.

The protein belongs to the herpesviridae major DNA-binding protein family. In terms of assembly, homooligomers. Forms double-helical filaments necessary for the formation of replication compartments within the host nucleus. Interacts with the origin-binding protein. Interacts with the helicase primase complex; this interaction stimulates primer synthesis activity of the helicase-primase complex. Interacts with the DNA polymerase. Interacts with the alkaline exonuclease; this interaction increases its nuclease processivity.

The protein localises to the host nucleus. Functionally, plays several crucial roles in viral infection. Participates in the opening of the viral DNA origin to initiate replication by interacting with the origin-binding protein. May disrupt loops, hairpins and other secondary structures present on ssDNA to reduce and eliminate pausing of viral DNA polymerase at specific sites during elongation. Promotes viral DNA recombination by performing strand-transfer, characterized by the ability to transfer a DNA strand from a linear duplex to a complementary single-stranded DNA circle. Can also catalyze the renaturation of complementary single strands. Additionally, reorganizes the host cell nucleus, leading to the formation of prereplicative sites and replication compartments. This process is driven by the protein which can form double-helical filaments in the absence of DNA. This Human herpesvirus 8 type P (isolate GK18) (HHV-8) protein is Major DNA-binding protein.